The chain runs to 257 residues: Glutamate racemase (257 aa).

Substrate is bound by residues 12 to 13 and 44 to 45; these read DS and YG. Cysteine 75 acts as the Proton donor/acceptor in catalysis. Position 76-77 (76-77) interacts with substrate; the sequence is NT. Cysteine 185 functions as the Proton donor/acceptor in the catalytic mechanism. 186-187 provides a ligand contact to substrate; that stretch reads TH.

It belongs to the aspartate/glutamate racemases family.

It catalyses the reaction L-glutamate = D-glutamate. The protein operates within cell wall biogenesis; peptidoglycan biosynthesis. Provides the (R)-glutamate required for cell wall biosynthesis. In Clostridium botulinum (strain Kyoto / Type A2), this protein is Glutamate racemase.